A 418-amino-acid chain; its full sequence is Serine hydroxymethyltransferase (418 aa).

(6S)-5,6,7,8-tetrahydrofolate-binding positions include Leu-121 and Gly-125–Leu-127. Lys-230 carries the N6-(pyridoxal phosphate)lysine modification. Ser-355–Phe-357 lines the (6S)-5,6,7,8-tetrahydrofolate pocket.

Belongs to the SHMT family. As to quaternary structure, homodimer. Pyridoxal 5'-phosphate serves as cofactor.

The protein localises to the cytoplasm. It carries out the reaction (6R)-5,10-methylene-5,6,7,8-tetrahydrofolate + glycine + H2O = (6S)-5,6,7,8-tetrahydrofolate + L-serine. It participates in one-carbon metabolism; tetrahydrofolate interconversion. It functions in the pathway amino-acid biosynthesis; glycine biosynthesis; glycine from L-serine: step 1/1. In terms of biological role, catalyzes the reversible interconversion of serine and glycine with tetrahydrofolate (THF) serving as the one-carbon carrier. This reaction serves as the major source of one-carbon groups required for the biosynthesis of purines, thymidylate, methionine, and other important biomolecules. Also exhibits THF-independent aldolase activity toward beta-hydroxyamino acids, producing glycine and aldehydes, via a retro-aldol mechanism. The protein is Serine hydroxymethyltransferase of Streptococcus agalactiae serotype III (strain NEM316).